The following is a 423-amino-acid chain: Structure-specific endonuclease subunit SLX1 (423 aa).

The GIY-YIG domain maps to 23 to 105 (AFYCCYLLRS…QNTKVSRHAD (83 aa)). Disordered stretches follow at residues 300 to 334 (RRRRQAGTPKGQGLKSVRGRGRGRGHSEDESDALQ) and 365 to 406 (AHRP…LGLQ).

The protein belongs to the SLX1 family. As to quaternary structure, forms a heterodimer with SLX4. A divalent metal cation is required as a cofactor.

The protein localises to the nucleus. Functionally, catalytic subunit of the SLX1-SLX4 structure-specific endonuclease that resolves DNA secondary structures generated during DNA repair and recombination. Has endonuclease activity towards branched DNA substrates, introducing single-strand cuts in duplex DNA close to junctions with ss-DNA. This chain is Structure-specific endonuclease subunit SLX1, found in Paracoccidioides brasiliensis (strain Pb03).